The sequence spans 737 residues: Catalase-peroxidase (737 aa).

Residues 89 to 219 (WHSAGTYRVF…LAASHMGLIY (131 aa)) constitute a cross-link (tryptophyl-tyrosyl-methioninium (Trp-Tyr) (with M-245)). The active-site Proton acceptor is the His90. The tryptophyl-tyrosyl-methioninium (Tyr-Met) (with W-89) cross-link spans 219 to 245 (YVNPEGPNGNPDPKAAARDIRVTFGRM). A heme b-binding site is contributed by His260.

It belongs to the peroxidase family. Peroxidase/catalase subfamily. As to quaternary structure, homodimer or homotetramer. Requires heme b as cofactor. In terms of processing, formation of the three residue Trp-Tyr-Met cross-link is important for the catalase, but not the peroxidase activity of the enzyme.

Its subcellular location is the cytoplasm. The catalysed reaction is H2O2 + AH2 = A + 2 H2O. The enzyme catalyses 2 H2O2 = O2 + 2 H2O. In terms of biological role, bifunctional enzyme with both catalase and broad-spectrum peroxidase activity. This Aspergillus terreus (strain NIH 2624 / FGSC A1156) protein is Catalase-peroxidase.